Reading from the N-terminus, the 90-residue chain is Small ribosomal subunit protein uS15 (90 aa).

The protein belongs to the universal ribosomal protein uS15 family. As to quaternary structure, part of the 30S ribosomal subunit. Forms a bridge to the 50S subunit in the 70S ribosome, contacting the 23S rRNA.

One of the primary rRNA binding proteins, it binds directly to 16S rRNA where it helps nucleate assembly of the platform of the 30S subunit by binding and bridging several RNA helices of the 16S rRNA. In terms of biological role, forms an intersubunit bridge (bridge B4) with the 23S rRNA of the 50S subunit in the ribosome. The protein is Small ribosomal subunit protein uS15 of Helicobacter pylori (strain J99 / ATCC 700824) (Campylobacter pylori J99).